The chain runs to 571 residues: Urease subunit alpha (571 aa).

One can recognise a Urease domain in the interval 132 to 571; it reads GAIDTHIHFI…LPMGQKYFLF (440 aa). Residues His137, His139, and Lys220 each coordinate Ni(2+). At Lys220 the chain carries N6-carboxylysine. A substrate-binding site is contributed by His222. 2 residues coordinate Ni(2+): His249 and His275. His323 (proton donor) is an active-site residue. Asp363 lines the Ni(2+) pocket.

Belongs to the metallo-dependent hydrolases superfamily. Urease alpha subunit family. Heterotrimer of UreA (gamma), UreB (beta) and UreC (alpha) subunits. Three heterotrimers associate to form the active enzyme. Requires Ni cation as cofactor. In terms of processing, carboxylation allows a single lysine to coordinate two nickel ions.

It is found in the cytoplasm. The enzyme catalyses urea + 2 H2O + H(+) = hydrogencarbonate + 2 NH4(+). It functions in the pathway nitrogen metabolism; urea degradation; CO(2) and NH(3) from urea (urease route): step 1/1. In Corynebacterium urealyticum (strain ATCC 43042 / DSM 7109), this protein is Urease subunit alpha.